Reading from the N-terminus, the 142-residue chain is Large ribosomal subunit protein bL17 (142 aa).

Belongs to the bacterial ribosomal protein bL17 family. Part of the 50S ribosomal subunit. Contacts protein L32.

This chain is Large ribosomal subunit protein bL17, found in Chlamydia muridarum (strain MoPn / Nigg).